Here is an 85-residue protein sequence, read N- to C-terminus: Beta-insect depressant toxin Lqh-dprIT3a (85 aa).

Residues 1–21 (MKLLLLLTISASMLIEGLVNA) form the signal peptide. Residues 22–82 (DGYIRGGDGC…EWDYETNTCG (61 aa)) form the LCN-type CS-alpha/beta domain. Cystine bridges form between cysteine 31/cysteine 81, cysteine 35/cysteine 56, cysteine 42/cysteine 63, and cysteine 46/cysteine 65. Glycine 82 carries the post-translational modification Glycine amide.

It belongs to the long (4 C-C) scorpion toxin superfamily. Sodium channel inhibitor family. Beta subfamily. Expressed by the venom gland.

It localises to the secreted. Its function is as follows. Depressant insect beta-toxins cause a transient contraction paralysis followed by a slow flaccid paralysis. They bind voltage-independently at site-4 of sodium channels (Nav) and block action potentials, primarily by depolarizing the axonal membrane and suppressing the sodium current. This depressant toxin is active only on insects. It is found in a relatively small amount in the venom, and its activity on insects is 10-fold higher compared to other known depressant toxins. In Leiurus hebraeus (Hebrew deathstalker scorpion), this protein is Beta-insect depressant toxin Lqh-dprIT3a.